Consider the following 273-residue polypeptide: Chaperone protein PsaB (273 aa).

A signal peptide spans 1-31 (MKNLFFSAYKKVFSYITSIVIFMVSLPYAYS). The cysteines at positions 128 and 163 are disulfide-linked.

The protein belongs to the periplasmic pilus chaperone family.

It localises to the periplasm. Its function is as follows. Required for the biogenesis of the pH 6 antigen. The protein is Chaperone protein PsaB (psaB) of Yersinia pestis.